Here is a 29-residue protein sequence, read N- to C-terminus: MSGYGTSFALIVVLFILLIIVGTAFVGGY.

Residues 8–28 form a helical membrane-spanning segment; sequence FALIVVLFILLIIVGTAFVGG.

The protein belongs to the SscA family.

The protein resides in the membrane. This is an uncharacterized protein from Bacillus subtilis (strain 168).